Here is a 186-residue protein sequence, read N- to C-terminus: Serine hydrolase RBBP9 (186 aa).

The tract at residues 63–67 (LHCDE) is involved in binding to RB1. Catalysis depends on charge relay system residues serine 75, aspartate 138, and histidine 165.

This sequence belongs to the RBBP9 family. In terms of assembly, interacts with RB1; the interaction disrupts RB1 binding to E2F1. Interacts with RBL1 and RBL2. In terms of tissue distribution, highly expressed in the spleen, testis and kidney. Also found in the heart, liver, lung and brain.

The enzyme catalyses valacyclovir + H2O = acyclovir + L-valine + H(+). Serine hydrolase. Catalyzes the hydrolytic activation of amino acid ester of the antiviral prodrug valacyclovir to its corresponding active drug, acyclovir. May negatively regulate basal or autocrine TGF-beta signaling by suppressing SMAD2-SMAD3 phosphorylation. May play a role in the transformation process due to its capacity to confer resistance to the growth-inhibitory effects of TGF-beta through interaction with RB1 and the subsequent displacement of E2F1. The sequence is that of Serine hydrolase RBBP9 from Rattus norvegicus (Rat).